The chain runs to 472 residues: MSRKCEFLVVGGGIAGVSCAESLAIYRPNASILLLTESSIVKSVTNLVPVARYLHKFDVREQDVSEMGASFQTLVDRLDHINSREHCIRTKAGLEIKYRYLCLCTGGTPKLFSGKVVNPLVIGIRDTDSVQLLQRKLATAKDVLILGNGGIASELAYELKDVNVHWVVKDSHISATFVDPGAAEFFHIAMNECNAKDSSPVVAIKRMRYSEVLPKEQTNNHGAALGPDWHRSVDLSGAREGEENRLPKIYYKSRISSVQDLADDAGAIVKLEHEDGSFQQLTCDFIVSATGVWPNTDYTCDSPLQFSDDGGISVDEMMRTNLVDVFAAGDVCTANWPAAMHWFQMRLWTQARQMGSMAGRSMAAASEGESVYQDFCFELFGHVTKLFGYPVVLLGRFNGQDLGRDYEILVRCTRNKEYIKFVLQNGRLRGAMLIGNTDLAETCENLILNGIDLEPYGDDILNPDIDIEDYFD.

It belongs to the class-I pyridine nucleotide-disulfide oxidoreductase family. PYROXD1 subfamily. Requires FAD as cofactor.

Functionally, probable oxidoreductase. This Drosophila melanogaster (Fruit fly) protein is Pyridine nucleotide-disulfide oxidoreductase domain-containing protein 1.